The chain runs to 409 residues: POU domain, class 4, transcription factor 2 (409 aa).

Positions 26–93 (YSALHSTSPG…SEAMRRACLP (68 aa)) are disordered. Over residues 31-52 (STSPGSSAPIAPSASSPSSSSN) the composition is skewed to low complexity. Over residues 53 to 69 (AGGGGGGGGGGGGGGGR) the composition is skewed to gly residues. The interval 91–237 (CLPTPPSNIF…MHQAALSMAH (147 aa)) is required for transcriptional activation. Positions 110 to 119 (RAEALAAVDI) match the POU-IV box motif. Low complexity predominate over residues 153-166 (AASSSSVPISHPSA). A disordered region spans residues 153–188 (AASSSSVPISHPSALAGTHHHHHHHHHHHHQPHQAL). A compositionally biased stretch (basic residues) spans 170–184 (THHHHHHHHHHHHQP). The Nuclear speckle targeting signal signature appears at 171–185 (HHHHHHHHHHHHQPH). Residues 238 to 409 (AHGLPSHMGC…QKRMKYSAGI (172 aa)) form a required for DNA-binding and transcriptional repression region. A POU-specific domain is found at 250-327 (DVDADPRDLE…ILQAWLEEAE (78 aa)). A DNA-binding region (homeobox) is located at residues 345–404 (KKRKRTSIAAPEKRSLEAYFAIQPRPSSEKIAAIAEKLDLKKNVVRVWFCNQRQKQKRMK).

Belongs to the POU transcription factor family. Class-4 subfamily. Interacts with POU4F1; this interaction inhibits both POU4F1 DNA-binding and transcriptional activities. Interacts (C-terminus) with ESR1 (via DNA-binding domain); this interaction increases the estrogen receptor ESR1 transcriptional activity in a DNA- and ligand 17-beta-estradiol-independent manner. Interacts (via C-terminus) with TP53 (via N-terminus). Interacts with DLX1 (via homeobox DNA-binding domain); this interaction suppresses DLX1-mediated transcriptional activity in postnatal retina enhancing retinal ganglion cell (RGC) differentiation. Interacts with DLX2 (via homeobox DNA-binding domain); this interaction enhances RGC differentiation. Interacts (via C-terminus) with ISL1 (via C-terminus). Interacts with ISL2. Interacts with LHX2. Expressed in the brain. Expressed in the ganglion cell layer of the retina.

The protein resides in the nucleus. The protein localises to the nucleus speckle. It localises to the cytoplasm. In terms of biological role, tissue-specific DNA-binding transcription factor involved in the development and differentiation of target cells. Functions either as activator or repressor modulating the rate of target gene transcription through RNA polymerase II enzyme in a promoter-dependent manner. Binds to the consensus octamer motif 5'-AT[A/T]A[T/A]T[A/T]A-3' of promoter of target genes. Plays a fundamental role in the gene regulatory network essential for retinal ganglion cell (RGC) differentiation. Binds to an octamer site to form a ternary complex with ISL1; cooperates positively with ISL1 and ISL2 to potentiate transcriptional activation of RGC target genes being involved in RGC fate commitment in the developing retina and RGC axon formation and pathfinding. Inhibits DLX1 and DLX2 transcriptional activities preventing DLX1- and DLX2-mediated ability to promote amacrine cell fate specification. In cooperation with TP53 potentiates transcriptional activation of BAX promoter activity increasing neuronal cell apoptosis. Negatively regulates BAX promoter activity in the absence of TP53. Acts as a transcriptional coactivator via its interaction with the transcription factor ESR1 by enhancing its effect on estrogen response element (ERE)-containing promoter. Antagonizes the transcriptional stimulatory activity of POU4F1 by preventing its binding to an octamer motif. Involved in TNFSF11-mediated terminal osteoclast differentiation. This Homo sapiens (Human) protein is POU domain, class 4, transcription factor 2.